We begin with the raw amino-acid sequence, 929 residues long: Isoleucine--tRNA ligase (929 aa).

Positions 58–68 (PYANGDIHIGH) match the 'HIGH' region motif. E563 is a binding site for L-isoleucyl-5'-AMP. The 'KMSKS' region motif lies at 605-609 (KMSKS). Residue K608 coordinates ATP. The Zn(2+) site is built by C892, C895, C912, and C915.

It belongs to the class-I aminoacyl-tRNA synthetase family. IleS type 1 subfamily. Monomer. Requires Zn(2+) as cofactor.

It localises to the cytoplasm. The catalysed reaction is tRNA(Ile) + L-isoleucine + ATP = L-isoleucyl-tRNA(Ile) + AMP + diphosphate. Functionally, catalyzes the attachment of isoleucine to tRNA(Ile). As IleRS can inadvertently accommodate and process structurally similar amino acids such as valine, to avoid such errors it has two additional distinct tRNA(Ile)-dependent editing activities. One activity is designated as 'pretransfer' editing and involves the hydrolysis of activated Val-AMP. The other activity is designated 'posttransfer' editing and involves deacylation of mischarged Val-tRNA(Ile). The polypeptide is Isoleucine--tRNA ligase (Neisseria meningitidis serogroup C (strain 053442)).